Here is a 513-residue protein sequence, read N- to C-terminus: Mesoderm induction early response protein 1 (513 aa).

Positions 1–16 (MAEPSVESSSPGGSAT) are enriched in low complexity. The segment at 1–174 (MAEPSVESSS…EEESEEDEDY (174 aa)) is disordered. 2 stretches are compositionally biased toward basic and acidic residues: residues 17–36 (SDDH…FDDE) and 46–63 (EGER…RESD). Positions 82–107 (QEDDDDEDEEEEEEEGEDDDDVDNDD) are enriched in acidic residues. Residues 131–146 (QSSNDDPAPSVASQDP) show a composition bias toward polar residues. The segment at 157 to 261 (YFDTNSEIEE…IKDNEQALYE (105 aa)) is interaction with HDAC1. Positions 162-174 (SEIEEESEEDEDY) are enriched in acidic residues. Positions 182–280 (KEIMVGSMFQ…ESLRRLRFNV (99 aa)) constitute an ELM2 domain. One can recognise an SANT domain in the interval 285–337 (EELSVWTEEECRNFEQGLKVYGKDFHVIQANKVRTRSVGECVAFYYMWKKSER). The segment at 368–513 (ESESAASSRA…KLEELETLDD (146 aa)) is disordered. Composition is skewed to basic and acidic residues over residues 416 to 425 (PSKDEAKPEG) and 463 to 476 (SRSE…NERP). A compositionally biased stretch (polar residues) spans 483–500 (NSNGKESPGSSEFFQEAN).

The protein localises to the nucleus. Transcriptional repressor regulating the expression of a number of genes. Probably functions through recruitment of histone deacetylases involved in chromatin silencing. This chain is Mesoderm induction early response protein 1 (MIER1), found in Gallus gallus (Chicken).